A 506-amino-acid polypeptide reads, in one-letter code: 5-OH-xanthotoxin synthase (506 aa).

Residues 3–23 (PVVIFLVLAFPIASVYLLFYH) traverse the membrane as a helical segment. The interval 365–370 (TGPLLI) is substrate specificity. A heme-binding site is contributed by cysteine 446.

Belongs to the cytochrome P450 family. It depends on heme as a cofactor.

It localises to the microsome membrane. It carries out the reaction xanthotoxin + reduced [NADPH--hemoprotein reductase] + O2 = 5-hydroxyxanthotoxin + oxidized [NADPH--hemoprotein reductase] + H2O + 2 H(+). It participates in secondary metabolite biosynthesis. Its function is as follows. Involved in the biosynthesis of coumarins and furanocoumarins (FCs), natural products required for defense responses against attacks by predators with potential medical and agroindustrial usages such as anticoagulant, rodenticide and artificial vanilla substitutes. Catalyzes the conversion of xanthotoxin into 5-hydroxyxanthotoxin. In Pastinaca sativa (Wild parsnip), this protein is 5-OH-xanthotoxin synthase.